The following is a 138-amino-acid chain: Acidic phospholipase A2 Ts-A1 (138 aa).

A signal peptide spans 1-16 (MRTLWIMAVLQVGVEG). 7 disulfide bridges follow: C42-C131, C44-C60, C59-C111, C65-C138, C66-C104, C73-C97, and C91-C102. Positions 43, 45, and 47 each coordinate Ca(2+). The active site involves H63. D64 is a Ca(2+) binding site. D105 is an active-site residue.

It depends on Ca(2+) as a cofactor. As to expression, expressed by the venom gland.

The protein localises to the secreted. The catalysed reaction is a 1,2-diacyl-sn-glycero-3-phosphocholine + H2O = a 1-acyl-sn-glycero-3-phosphocholine + a fatty acid + H(+). Snake venom phospholipase A2 (PLA2) that shows a moderate inhibition of ADP-induced human platelet aggregation when tested on platelet rich plasma. Exhibits high hydrolytic activities and prefers the anionic micelles (dPPC with deoxycholate) to the zwitterionic micelles (dPPC with Triton X-100). PLA2 catalyzes the calcium-dependent hydrolysis of the 2-acyl groups in 3-sn-phosphoglycerides. The polypeptide is Acidic phospholipase A2 Ts-A1 (Trimeresurus stejnegeri (Chinese green tree viper)).